The chain runs to 2276 residues: Protein Ycf2 (2276 aa).

Residue 1621–1628 (GSIGTGRS) coordinates ATP.

This sequence belongs to the Ycf2 family.

It localises to the plastid. Its subcellular location is the chloroplast stroma. In terms of biological role, probable ATPase of unknown function. Its presence in a non-photosynthetic plant (Epifagus virginiana) and experiments in tobacco indicate that it has an essential function which is probably not related to photosynthesis. The sequence is that of Protein Ycf2 from Guizotia abyssinica (Niger).